Consider the following 285-residue polypeptide: MNKELESIYQNIANQSELGQTANYDSYYNPKRLYPIPRAPKRQEINLDPNSTTFYGFDCWNHYEVSWLNSKGKPVVAMAVISYDCHSPCIIESKSLKLYFNSLNNSTFPDVETVVQTISKDLSHCIGSEVAVNVYPLSEIASQTIYAAFDGICLDKLDIECSVYHVMPDFLSTSSKLVEEVLYSDLLKSNCLVTNQPDWGSVQIIYKGKKINHEGLLKYLISFRNHNEFHEQCIERIFADIMRFCQPESLAVYGRYTRRGGLDINPIRSTEPCAFDGQNIRLIRQ.

91 to 93 is a binding site for substrate; sequence IES. 93–94 provides a ligand contact to NADPH; the sequence is SK. The active-site Thioimide intermediate is Cys-191. Residue Asp-198 is the Proton donor of the active site. 230–231 contributes to the substrate binding site; the sequence is HE. Residue 259-260 coordinates NADPH; the sequence is RG.

The protein belongs to the GTP cyclohydrolase I family. QueF type 2 subfamily. In terms of assembly, homodimer.

The protein localises to the cytoplasm. The catalysed reaction is 7-aminomethyl-7-carbaguanine + 2 NADP(+) = 7-cyano-7-deazaguanine + 2 NADPH + 3 H(+). It functions in the pathway tRNA modification; tRNA-queuosine biosynthesis. Catalyzes the NADPH-dependent reduction of 7-cyano-7-deazaguanine (preQ0) to 7-aminomethyl-7-deazaguanine (preQ1). The sequence is that of NADPH-dependent 7-cyano-7-deazaguanine reductase from Legionella pneumophila (strain Paris).